The following is a 562-amino-acid chain: Arginine--tRNA ligase (562 aa).

The short motif at 129–139 (ANPTGPLHVGH) is the 'HIGH' region element.

Belongs to the class-I aminoacyl-tRNA synthetase family. In terms of assembly, monomer.

The protein localises to the cytoplasm. It catalyses the reaction tRNA(Arg) + L-arginine + ATP = L-arginyl-tRNA(Arg) + AMP + diphosphate. This Xanthomonas oryzae pv. oryzae (strain MAFF 311018) protein is Arginine--tRNA ligase.